A 364-amino-acid chain; its full sequence is GDP-fucose transporter 1 (364 aa).

Transmembrane regions (helical) follow at residues 34-56, 76-98, 111-130, 140-162, 167-185, 195-214, 227-249, and 264-286; these read FVLRALQIALVVSLYWVTSISMV, VTFYQCLVTVLLCKGLSSLATCC, LKVARSVLPLSVVFIGMITF, VAFYNVGRSLTTVFNVLLSYLLL, SFYALLTCSVIIGGFWLGV, SWTGTLFGVLASLCVSLNAI, IWRLTFYNNANACVLFLPLLLAL, and AHFWAMMTLGGLFGFAIGYVTGL. Positions 345-364 are disordered; it reads MKKTQEEPHPRENEKSNMEV.

Belongs to the TPT transporter family. SLC35C subfamily.

Its subcellular location is the golgi apparatus membrane. The enzyme catalyses GMP(out) + GDP-beta-L-fucose(in) = GMP(in) + GDP-beta-L-fucose(out). Its function is as follows. Antiporter specific for GDP-l-fucose and depending on the concomitant reverse transport of GMP. Involved in GDP-fucose import from the cytoplasm into the Golgi lumen. This Bos taurus (Bovine) protein is GDP-fucose transporter 1 (SLC35C1).